The sequence spans 876 residues: Alanine--tRNA ligase (876 aa).

Position 74 is an N6-acetyllysine (Lys74). Zn(2+)-binding residues include His564, His568, Cys666, and His670.

This sequence belongs to the class-II aminoacyl-tRNA synthetase family. Homotetramer. It depends on Zn(2+) as a cofactor.

Its subcellular location is the cytoplasm. It carries out the reaction tRNA(Ala) + L-alanine + ATP = L-alanyl-tRNA(Ala) + AMP + diphosphate. Catalyzes the attachment of alanine to tRNA(Ala) in a two-step reaction: alanine is first activated by ATP to form Ala-AMP and then transferred to the acceptor end of tRNA(Ala). Also edits incorrectly charged Ser-tRNA(Ala) and Gly-tRNA(Ala) via its editing domain. The chain is Alanine--tRNA ligase from Escherichia coli O1:K1 / APEC.